A 232-amino-acid polypeptide reads, in one-letter code: Biosynthetic peptidoglycan transglycosylase (232 aa).

A helical transmembrane segment spans residues 14–34; sequence AAVALVLLYQLWIFAHVLWWI.

The protein belongs to the glycosyltransferase 51 family.

The protein localises to the cell inner membrane. The enzyme catalyses [GlcNAc-(1-&gt;4)-Mur2Ac(oyl-L-Ala-gamma-D-Glu-L-Lys-D-Ala-D-Ala)](n)-di-trans,octa-cis-undecaprenyl diphosphate + beta-D-GlcNAc-(1-&gt;4)-Mur2Ac(oyl-L-Ala-gamma-D-Glu-L-Lys-D-Ala-D-Ala)-di-trans,octa-cis-undecaprenyl diphosphate = [GlcNAc-(1-&gt;4)-Mur2Ac(oyl-L-Ala-gamma-D-Glu-L-Lys-D-Ala-D-Ala)](n+1)-di-trans,octa-cis-undecaprenyl diphosphate + di-trans,octa-cis-undecaprenyl diphosphate + H(+). The protein operates within cell wall biogenesis; peptidoglycan biosynthesis. Peptidoglycan polymerase that catalyzes glycan chain elongation from lipid-linked precursors. This Thiobacillus denitrificans (strain ATCC 25259 / T1) protein is Biosynthetic peptidoglycan transglycosylase.